The primary structure comprises 462 residues: 3-oxoacyl-[acyl-carrier-protein] synthase I, chloroplastic (462 aa).

A chloroplast-targeting transit peptide spans 1 to 35 (MHAHAAHALGLRVPPPAFPRRRARPRRRPAAAVLA). A disordered region spans residues 1 to 45 (MHAHAAHALGLRVPPPAFPRRRARPRRRPAAAVLATSAAPQRETD). Residues 19–29 (PRRRARPRRRP) are compositionally biased toward basic residues. Low complexity predominate over residues 30–39 (AAAVLATSAA). The region spanning 47–459 (RKRVVITGMG…GHNSVVVFAP (413 aa)) is the Ketosynthase family 3 (KS3) domain. Catalysis depends on for beta-ketoacyl synthase activity residues Cys-213, His-353, and His-389.

It belongs to the thiolase-like superfamily. Beta-ketoacyl-ACP synthases family. As to quaternary structure, homodimer.

It localises to the plastid. Its subcellular location is the chloroplast. It carries out the reaction a fatty acyl-[ACP] + malonyl-[ACP] + H(+) = a 3-oxoacyl-[ACP] + holo-[ACP] + CO2. Its function is as follows. Catalyzes the condensation reaction of fatty acid synthesis by the addition to an acyl acceptor of two carbons from malonyl-ACP. Specific for elongation from C-10 to unsaturated C-16 and C-18 fatty acids. The polypeptide is 3-oxoacyl-[acyl-carrier-protein] synthase I, chloroplastic (KAS12) (Hordeum vulgare (Barley)).